We begin with the raw amino-acid sequence, 406 residues long: Tyrosine--tRNA ligase (406 aa).

Tyr-35 is a binding site for L-tyrosine. The 'HIGH' region signature appears at 40-49 (PTADSLHVGH). L-tyrosine is bound by residues Tyr-168 and Gln-172. The short motif at 228–232 (KMGKT) is the 'KMSKS' region element. An ATP-binding site is contributed by Lys-231. One can recognise an S4 RNA-binding domain in the interval 340-404 (STVLDIIAKT…RGKKNYNKIE (65 aa)).

Belongs to the class-I aminoacyl-tRNA synthetase family. TyrS type 1 subfamily. Homodimer.

It is found in the cytoplasm. The enzyme catalyses tRNA(Tyr) + L-tyrosine + ATP = L-tyrosyl-tRNA(Tyr) + AMP + diphosphate + H(+). Functionally, catalyzes the attachment of tyrosine to tRNA(Tyr) in a two-step reaction: tyrosine is first activated by ATP to form Tyr-AMP and then transferred to the acceptor end of tRNA(Tyr). The polypeptide is Tyrosine--tRNA ligase (Clostridium botulinum (strain Alaska E43 / Type E3)).